A 56-amino-acid chain; its full sequence is MFKQLILLALAAVFLLINISSAEPAAEPNANAEPLAEASAEPRIKIGLFDQLSKLG.

A signal peptide spans 1–22; that stretch reads MFKQLILLALAAVFLLINISSA. The propeptide occupies 23–42; it reads EPAAEPNANAEPLAEASAEP. L55 bears the Leucine amide mark.

As to expression, expressed by the venom gland.

It is found in the secreted. In terms of biological role, inhibits sodium channels (Nav) inactivation. Shows two types of inhibitory activities on channels. Inhibition of hNav1.6/SCN8A shows a large increase in the steady-state current component without any increase in the slow component, whereas inhibition of hNav1.1/SCN1A, hNav1.2/SCN2A, hNav1.3/SCN3A and hNav1.7/SCN9A shows a large increase in the slow component with only a small steady-state component. Is 5-fold less potent than beta-PMTX for inducing repetitive action potentials in lobster neuromuscular junctions. This is Alpha-pompilidotoxin from Anoplius samariensis (Solitary wasp).